Reading from the N-terminus, the 600-residue chain is Calcium/calmodulin-dependent serine/threonine-protein kinase 1 (600 aa).

Residues 1–99 are disordered; it reads MGLCHGKSAA…GGFKRPFPPP (99 aa). The segment covering 24-56 has biased composition (low complexity); sequence TRVAEAAAAPAKPASPAPSAAAAAAAPAKPGTP. Over residues 74–85 the composition is skewed to polar residues; it reads YKGSPANSSVAS. The 263-residue stretch at 147 to 409 folds into the Protein kinase domain; it reads YELGREVGRG…AAQALCHPWI (263 aa). Residues 153 to 161 and Lys-179 contribute to the ATP site; that span reads VGRGHFGYT. Asp-275 acts as the Proton acceptor in catalysis.

Belongs to the protein kinase superfamily. Ser/Thr protein kinase family. Post-translationally, autophosphorylated. As to expression, highly expressed in roots in the zone of cell division. Expressed in leaf mesophyll cells and at lower levels in mature stems.

The catalysed reaction is L-seryl-[protein] + ATP = O-phospho-L-seryl-[protein] + ADP + H(+). The enzyme catalyses L-threonyl-[protein] + ATP = O-phospho-L-threonyl-[protein] + ADP + H(+). With respect to regulation, activated by the binding of calmodulin-like protein 1 (CML1) in the presence of Ca(2+). Functionally, possesses kinase activity in vitro. This is Calcium/calmodulin-dependent serine/threonine-protein kinase 1 (CAMK1) from Oryza sativa subsp. japonica (Rice).